The chain runs to 332 residues: Glycerol-3-phosphate dehydrogenase [NAD(P)+] (332 aa).

Residues S11, F12, K32, and K106 each coordinate NADPH. Sn-glycerol 3-phosphate-binding residues include K106, G137, and S139. NADPH is bound at residue A141. K192, D245, S255, R256, and N257 together coordinate sn-glycerol 3-phosphate. K192 serves as the catalytic Proton acceptor. R256 serves as a coordination point for NADPH. Residues V280 and E282 each coordinate NADPH.

This sequence belongs to the NAD-dependent glycerol-3-phosphate dehydrogenase family.

The protein resides in the cytoplasm. The enzyme catalyses sn-glycerol 3-phosphate + NAD(+) = dihydroxyacetone phosphate + NADH + H(+). It carries out the reaction sn-glycerol 3-phosphate + NADP(+) = dihydroxyacetone phosphate + NADPH + H(+). The protein operates within membrane lipid metabolism; glycerophospholipid metabolism. Catalyzes the reduction of the glycolytic intermediate dihydroxyacetone phosphate (DHAP) to sn-glycerol 3-phosphate (G3P), the key precursor for phospholipid synthesis. In Staphylococcus saprophyticus subsp. saprophyticus (strain ATCC 15305 / DSM 20229 / NCIMB 8711 / NCTC 7292 / S-41), this protein is Glycerol-3-phosphate dehydrogenase [NAD(P)+].